The following is a 330-amino-acid chain: DNA primase small subunit PriS (330 aa).

Residues D101 and D103 contribute to the active site. Positions 116, 119, 128, and 131 each coordinate Zn(2+). D235 is an active-site residue.

Belongs to the eukaryotic-type primase small subunit family. As to quaternary structure, heterodimer of a small subunit (PriS) and a large subunit (PriL). Mg(2+) is required as a cofactor. Requires Mn(2+) as cofactor.

In terms of biological role, catalytic subunit of DNA primase, an RNA polymerase that catalyzes the synthesis of short RNA molecules used as primers for DNA polymerase during DNA replication. The small subunit contains the primase catalytic core and has DNA synthesis activity on its own. Binding to the large subunit stabilizes and modulates the activity, increasing the rate of DNA synthesis while decreasing the length of the DNA fragments, and conferring RNA synthesis capability. The DNA polymerase activity may enable DNA primase to also catalyze primer extension after primer synthesis. May also play a role in DNA repair. Possesses a template-independent 3'-terminal nucleotidyl transferase activity. The protein is DNA primase small subunit PriS of Saccharolobus solfataricus (strain ATCC 35092 / DSM 1617 / JCM 11322 / P2) (Sulfolobus solfataricus).